The primary structure comprises 596 residues: Aspartate--tRNA(Asp/Asn) ligase (596 aa).

Glutamate 173 provides a ligand contact to L-aspartate. Residues 197-200 (QLFK) form an aspartate region. Arginine 219 serves as a coordination point for L-aspartate. ATP is bound by residues 219–221 (RDE) and glutamine 228. Residue histidine 450 participates in L-aspartate binding. Residue glutamate 485 coordinates ATP. Residue arginine 492 coordinates L-aspartate. 537–540 (GLDR) is an ATP binding site.

The protein belongs to the class-II aminoacyl-tRNA synthetase family. Type 1 subfamily. Homodimer.

Its subcellular location is the cytoplasm. The enzyme catalyses tRNA(Asx) + L-aspartate + ATP = L-aspartyl-tRNA(Asx) + AMP + diphosphate. Its function is as follows. Aspartyl-tRNA synthetase with relaxed tRNA specificity since it is able to aspartylate not only its cognate tRNA(Asp) but also tRNA(Asn). Reaction proceeds in two steps: L-aspartate is first activated by ATP to form Asp-AMP and then transferred to the acceptor end of tRNA(Asp/Asn). This chain is Aspartate--tRNA(Asp/Asn) ligase, found in Hydrogenovibrio crunogenus (strain DSM 25203 / XCL-2) (Thiomicrospira crunogena).